The following is a 179-amino-acid chain: 5'-deoxynucleotidase VV1_0013 (179 aa).

Residue His-53 coordinates a divalent metal cation. Substrate contacts are provided by residues 62–65 (DLPT) and Asp-122. Asp-122 provides a ligand contact to a divalent metal cation.

Belongs to the 5DNU family. Homodimer. A divalent metal cation serves as cofactor.

It is found in the cytoplasm. It carries out the reaction a 2'-deoxyribonucleoside 5'-phosphate + H2O = a 2'-deoxyribonucleoside + phosphate. Its function is as follows. Catalyzes the strictly specific dephosphorylation of 2'-deoxyribonucleoside 5'-monophosphates. The protein is 5'-deoxynucleotidase VV1_0013 of Vibrio vulnificus (strain CMCP6).